Consider the following 203-residue polypeptide: Ras-related protein Rab-8B (203 aa).

GTP is bound by residues 22-29, 70-74, and 128-131; these read GDSGVGKS, DTAGQ, and NKCD. Residues Cys-202 and Cys-203 are each lipidated (S-geranylgeranyl cysteine).

This sequence belongs to the small GTPase superfamily. Rab family.

It is found in the cell membrane. In terms of biological role, protein transport. Probably involved in vesicular traffic. The protein is Ras-related protein Rab-8B (rab8B) of Dictyostelium discoideum (Social amoeba).